The following is a 73-amino-acid chain: MSDPCNCVETGDCRCADGSCSDCSNCKCGDSCKCSKPNCCGKNVTCKCGENCQCGVGCTGPDSCTCDSGCSCK.

Residues Cys15, Cys20, Cys26, Cys28, Cys32, Cys34, Cys39, Cys46, Cys48, Cys52, Cys54, Cys58, Cys64, Cys66, Cys70, and Cys72 each coordinate Cd(2+).

It belongs to the metallothionein superfamily. Type 2 family.

Functionally, the metallothioneins are involved in the cellular sequestration of toxic metal ions. This chain is Metallothionein, found in Dreissena polymorpha (Zebra mussel).